The chain runs to 287 residues: Probable 3-hydroxybutyryl-CoA dehydrogenase (287 aa).

This sequence belongs to the 3-hydroxyacyl-CoA dehydrogenase family.

The enzyme catalyses (3S)-3-hydroxybutanoyl-CoA + NADP(+) = acetoacetyl-CoA + NADPH + H(+). It participates in lipid metabolism; butanoate metabolism. The chain is Probable 3-hydroxybutyryl-CoA dehydrogenase (mmgB) from Bacillus subtilis (strain 168).